The sequence spans 390 residues: Tryptophan synthase beta chain 2 (390 aa).

Lys-83 bears the N6-(pyridoxal phosphate)lysine mark.

It belongs to the TrpB family. As to quaternary structure, tetramer of two alpha and two beta chains. Pyridoxal 5'-phosphate is required as a cofactor.

The catalysed reaction is (1S,2R)-1-C-(indol-3-yl)glycerol 3-phosphate + L-serine = D-glyceraldehyde 3-phosphate + L-tryptophan + H2O. Its pathway is amino-acid biosynthesis; L-tryptophan biosynthesis; L-tryptophan from chorismate: step 5/5. In terms of biological role, the beta subunit is responsible for the synthesis of L-tryptophan from indole and L-serine. The polypeptide is Tryptophan synthase beta chain 2 (trpB2) (Methanothermobacter marburgensis (strain ATCC BAA-927 / DSM 2133 / JCM 14651 / NBRC 100331 / OCM 82 / Marburg) (Methanobacterium thermoautotrophicum)).